The following is a 331-amino-acid chain: Ribosomal RNA small subunit methyltransferase C (331 aa).

It belongs to the methyltransferase superfamily. RsmC family. In terms of assembly, monomer.

The protein resides in the cytoplasm. It carries out the reaction guanosine(1207) in 16S rRNA + S-adenosyl-L-methionine = N(2)-methylguanosine(1207) in 16S rRNA + S-adenosyl-L-homocysteine + H(+). Specifically methylates the guanine in position 1207 of 16S rRNA in the 30S particle. In Ectopseudomonas mendocina (strain ymp) (Pseudomonas mendocina), this protein is Ribosomal RNA small subunit methyltransferase C.